We begin with the raw amino-acid sequence, 497 residues long: MKKNNLKYILFPWIKNTPQKKFSNLSLDSRKLTSKDVFIAIKGTKKDGNDFIFEAVKKRVVAILSETKEKKKHGEINYINNIPILSFFKLSEKISNLAARVYKEPAKTLKIIGVTGTNGKTTVTQLINQWSELLGKKIATMGTLGNGFYNALKTTKNTTSSAIDIQSFLHIAAKKKINLVTMEVSSHGLVQNRVKNIPFYIGIFTNLTQDHLDYHKNMKQYESAKWSFFSQHKIKKIILNANDKYAKKWLRKLSDKYTIAVTIQNEKQKKYSTKWINATGIKYNVNSTDVEFESSWGQGILSTCLIGYFNIQNLLLSFASMLEMNYKLSDLINTSIQLQPILGRMQKFDVFGKPKVIIDYAHTPDALKKALNAIKSYYKKKIWCIFGCGGERDQTKRPLMGSISEKIADRVIITNDNPRNENQNKIIKEIVQGCIKKEKIIIIPNREKAISSTFFKANIDDIIFISGKGHENQQIIKNKIINYSDQKVVIKLLEKKI.

Residues leucine 27 and serine 29 each contribute to the UDP-N-acetyl-alpha-D-muramoyl-L-alanyl-D-glutamate site. 116 to 122 (GTNGKTT) contacts ATP. UDP-N-acetyl-alpha-D-muramoyl-L-alanyl-D-glutamate-binding positions include asparagine 157, 158 to 159 (TT), serine 185, glutamine 191, and arginine 193. Position 225 is an N6-carboxylysine (lysine 225). Meso-2,6-diaminopimelate contacts are provided by residues arginine 392, 416–419 (DNPR), glycine 467, and glutamate 471. The Meso-diaminopimelate recognition motif signature appears at 416–419 (DNPR).

It belongs to the MurCDEF family. MurE subfamily. The cofactor is Mg(2+). In terms of processing, carboxylation is probably crucial for Mg(2+) binding and, consequently, for the gamma-phosphate positioning of ATP.

It localises to the cytoplasm. It catalyses the reaction UDP-N-acetyl-alpha-D-muramoyl-L-alanyl-D-glutamate + meso-2,6-diaminopimelate + ATP = UDP-N-acetyl-alpha-D-muramoyl-L-alanyl-gamma-D-glutamyl-meso-2,6-diaminopimelate + ADP + phosphate + H(+). The protein operates within cell wall biogenesis; peptidoglycan biosynthesis. In terms of biological role, catalyzes the addition of meso-diaminopimelic acid to the nucleotide precursor UDP-N-acetylmuramoyl-L-alanyl-D-glutamate (UMAG) in the biosynthesis of bacterial cell-wall peptidoglycan. This is UDP-N-acetylmuramoyl-L-alanyl-D-glutamate--2,6-diaminopimelate ligase from Buchnera aphidicola subsp. Schizaphis graminum (strain Sg).